The primary structure comprises 545 residues: Purple acid phosphatase 13 (545 aa).

A signal peptide spans 1–25; the sequence is MVVKYTMSMSFFVIFASTVTIIVHG. Asn125 and Asn145 each carry an N-linked (GlcNAc...) asparagine glycan. Asp203 provides a ligand contact to Fe cation. Residue Asn209 is glycosylated (N-linked (GlcNAc...) asparagine). Tyr233 contributes to the Fe cation binding site. Residues Asn240, Asn254, Asn306, Asn321, Asn351, and Asn367 are each glycosylated (N-linked (GlcNAc...) asparagine). The active-site Proton donor is His389. His416 is a binding site for Zn(2+). 416-418 contributes to the substrate binding site; sequence HVD. 4 N-linked (GlcNAc...) asparagine glycosylation sites follow: Asn428, Asn466, Asn475, and Asn510.

It belongs to the metallophosphoesterase superfamily. Purple acid phosphatase family. As to quaternary structure, homodimer. Fe cation serves as cofactor. Zn(2+) is required as a cofactor. Expressed in stems, leaves, flowers and siliques.

Its subcellular location is the secreted. The enzyme catalyses a phosphate monoester + H2O = an alcohol + phosphate. This is Purple acid phosphatase 13 (PAP13) from Arabidopsis thaliana (Mouse-ear cress).